A 321-amino-acid chain; its full sequence is Ras association domain-containing protein 4 (321 aa).

A disordered region spans residues 79–159 (HLPSTSWMPR…RPKCRAPGEA (81 aa)). The span at 98 to 110 (SPQNGNITAQGPS) shows a compositional bias: polar residues. A Phosphoserine modification is found at serine 141. The Ras-associating domain occupies 174 to 262 (YNHKTSVFTP…ARIFLMEADL (89 aa)). Positions 270-317 (VAQYIKFEMPVLDSFVEKLKEEEEREIIKLTMKFQALRLTMLQRLEQL) constitute an SARAH domain.

Interacts directly with activated KRAS in a GTP-dependent manner. In terms of tissue distribution, widely expressed. Frequently down-regulated in tumor cell lines.

Functionally, potential tumor suppressor. May act as a KRAS effector protein. May promote apoptosis and cell cycle arrest. The sequence is that of Ras association domain-containing protein 4 (RASSF4) from Homo sapiens (Human).